A 227-amino-acid polypeptide reads, in one-letter code: NAD(P)H-quinone oxidoreductase subunit K, chloroplastic (227 aa).

The [4Fe-4S] cluster site is built by Cys43, Cys44, Cys108, and Cys139.

This sequence belongs to the complex I 20 kDa subunit family. NDH is composed of at least 16 different subunits, 5 of which are encoded in the nucleus. The cofactor is [4Fe-4S] cluster.

Its subcellular location is the plastid. It is found in the chloroplast thylakoid membrane. It catalyses the reaction a plastoquinone + NADH + (n+1) H(+)(in) = a plastoquinol + NAD(+) + n H(+)(out). It carries out the reaction a plastoquinone + NADPH + (n+1) H(+)(in) = a plastoquinol + NADP(+) + n H(+)(out). NDH shuttles electrons from NAD(P)H:plastoquinone, via FMN and iron-sulfur (Fe-S) centers, to quinones in the photosynthetic chain and possibly in a chloroplast respiratory chain. The immediate electron acceptor for the enzyme in this species is believed to be plastoquinone. Couples the redox reaction to proton translocation, and thus conserves the redox energy in a proton gradient. This chain is NAD(P)H-quinone oxidoreductase subunit K, chloroplastic, found in Spinacia oleracea (Spinach).